The primary structure comprises 377 residues: N5-carboxyaminoimidazole ribonucleotide synthase (377 aa).

ATP is bound by residues Arg-93, Lys-133, 138–144 (GYDGKGQ), 175–178 (EEFV), Glu-183, His-206, and 257–258 (NE). An ATP-grasp domain is found at 97–287 (KALLDHAGVR…QFENHLRAVC (191 aa)).

This sequence belongs to the PurK/PurT family. In terms of assembly, homodimer.

It carries out the reaction 5-amino-1-(5-phospho-beta-D-ribosyl)imidazole + hydrogencarbonate + ATP = 5-carboxyamino-1-(5-phospho-D-ribosyl)imidazole + ADP + phosphate + 2 H(+). The protein operates within purine metabolism; IMP biosynthesis via de novo pathway; 5-amino-1-(5-phospho-D-ribosyl)imidazole-4-carboxylate from 5-amino-1-(5-phospho-D-ribosyl)imidazole (N5-CAIR route): step 1/2. In terms of biological role, catalyzes the ATP-dependent conversion of 5-aminoimidazole ribonucleotide (AIR) and HCO(3)(-) to N5-carboxyaminoimidazole ribonucleotide (N5-CAIR). This Vibrio vulnificus (strain CMCP6) protein is N5-carboxyaminoimidazole ribonucleotide synthase.